The chain runs to 214 residues: Small ribosomal subunit protein eS6 (214 aa).

It belongs to the eukaryotic ribosomal protein eS6 family.

In Saccharolobus islandicus (strain L.S.2.15 / Lassen #1) (Sulfolobus islandicus), this protein is Small ribosomal subunit protein eS6.